We begin with the raw amino-acid sequence, 478 residues long: DNA-directed RNA polymerase II subunit RPB1 (478 aa).

Residues Cys-68, Cys-71, Cys-78, His-81, Cys-108, Cys-111, and Cys-149 each coordinate Zn(2+). Residues Asp-474 and Asp-476 each contribute to the Mg(2+) site.

This sequence belongs to the RNA polymerase beta' chain family. In terms of assembly, component of the RNA polymerase II (Pol II) complex consisting of 12 subunits. In terms of processing, phosphorylation activates POL II.

It is found in the nucleus. It carries out the reaction RNA(n) + a ribonucleoside 5'-triphosphate = RNA(n+1) + diphosphate. Its function is as follows. DNA-dependent RNA polymerase catalyzes the transcription of DNA into RNA using the four ribonucleoside triphosphates as substrates. Largest and catalytic component of RNA polymerase II which synthesizes mRNA precursors and many functional non-coding RNAs. Forms the polymerase active center together with the second largest subunit. Pol II is the central component of the basal RNA polymerase II transcription machinery. It is composed of mobile elements that move relative to each other. RPB1 is part of the core element with the central large cleft, the clamp element that moves to open and close the cleft and the jaws that are thought to grab the incoming DNA template. At the start of transcription, a single-stranded DNA template strand of the promoter is positioned within the central active site cleft of Pol II. A bridging helix emanates from RPB1 and crosses the cleft near the catalytic site and is thought to promote translocation of Pol II by acting as a ratchet that moves the RNA-DNA hybrid through the active site by switching from straight to bent conformations at each step of nucleotide addition. During transcription elongation, Pol II moves on the template as the transcript elongates. Elongation is influenced by the phosphorylation status of the C-terminal domain (CTD) of Pol II largest subunit (RPB1), which serves as a platform for assembly of factors that regulate transcription initiation, elongation, termination and mRNA processing. This is DNA-directed RNA polymerase II subunit RPB1 (RPB1) from Euplotoides octocarinatus (Freshwater ciliate).